We begin with the raw amino-acid sequence, 259 residues long: Isoprenyl transferase (259 aa).

Asp-30 is a catalytic residue. Asp-30 serves as a coordination point for Mg(2+). Substrate contacts are provided by residues 31 to 34 (GNGR), Trp-35, Arg-43, His-47, and 75 to 77 (STE). The active-site Proton acceptor is the Asn-78. Substrate contacts are provided by residues Trp-79, Arg-81, Arg-198, and 204-206 (RIS). A Mg(2+)-binding site is contributed by Glu-217.

This sequence belongs to the UPP synthase family. Homodimer. Requires Mg(2+) as cofactor.

Functionally, catalyzes the condensation of isopentenyl diphosphate (IPP) with allylic pyrophosphates generating different type of terpenoids. The polypeptide is Isoprenyl transferase (Caulobacter vibrioides (strain ATCC 19089 / CIP 103742 / CB 15) (Caulobacter crescentus)).